The sequence spans 160 residues: Gene 34 protein (160 aa).

Polar residues predominate over residues 1-11; the sequence is MDSPRGISTAT. Positions 1–26 are disordered; that stretch reads MDSPRGISTATGDAHAEAAVSPAAEI.

This is Gene 34 protein from Equus caballus (Horse).